Here is a 232-residue protein sequence, read N- to C-terminus: UPF0235 protein At5g63440 (232 aa).

Belongs to the UPF0235 family. Interacts with CTN.

Its subcellular location is the nucleus speckle. May play a role during early embryonic development. Probably involved in pre-mRNA splicing. The chain is UPF0235 protein At5g63440 from Arabidopsis thaliana (Mouse-ear cress).